The following is a 180-amino-acid chain: NAD(P)H-quinone oxidoreductase subunit I, chloroplastic (180 aa).

4Fe-4S ferredoxin-type domains are found at residues 55-84 and 95-124; these read GRIH…VDWK and LNYS…MTEE. [4Fe-4S] cluster-binding residues include cysteine 64, cysteine 67, cysteine 70, cysteine 74, cysteine 104, cysteine 107, cysteine 110, and cysteine 114.

It belongs to the complex I 23 kDa subunit family. As to quaternary structure, NDH is composed of at least 16 different subunits, 5 of which are encoded in the nucleus. The cofactor is [4Fe-4S] cluster.

The protein resides in the plastid. Its subcellular location is the chloroplast thylakoid membrane. It carries out the reaction a plastoquinone + NADH + (n+1) H(+)(in) = a plastoquinol + NAD(+) + n H(+)(out). It catalyses the reaction a plastoquinone + NADPH + (n+1) H(+)(in) = a plastoquinol + NADP(+) + n H(+)(out). In terms of biological role, NDH shuttles electrons from NAD(P)H:plastoquinone, via FMN and iron-sulfur (Fe-S) centers, to quinones in the photosynthetic chain and possibly in a chloroplast respiratory chain. The immediate electron acceptor for the enzyme in this species is believed to be plastoquinone. Couples the redox reaction to proton translocation, and thus conserves the redox energy in a proton gradient. The chain is NAD(P)H-quinone oxidoreductase subunit I, chloroplastic from Ranunculus macranthus (Large buttercup).